We begin with the raw amino-acid sequence, 471 residues long: Glutamate--tRNA ligase (471 aa).

The 'HIGH' region signature appears at 9-19; it reads PSPTGYLHVGG. Zn(2+) is bound by residues Cys98, Cys100, Cys125, and His127. The 'KMSKS' region signature appears at 237-241; that stretch reads KLSKR. Lys240 provides a ligand contact to ATP.

The protein belongs to the class-I aminoacyl-tRNA synthetase family. Glutamate--tRNA ligase type 1 subfamily. In terms of assembly, monomer. Zn(2+) serves as cofactor.

The protein resides in the cytoplasm. It carries out the reaction tRNA(Glu) + L-glutamate + ATP = L-glutamyl-tRNA(Glu) + AMP + diphosphate. Catalyzes the attachment of glutamate to tRNA(Glu) in a two-step reaction: glutamate is first activated by ATP to form Glu-AMP and then transferred to the acceptor end of tRNA(Glu). This is Glutamate--tRNA ligase from Escherichia coli O1:K1 / APEC.